Here is a 420-residue protein sequence, read N- to C-terminus: MTLTIKPSEIFGSIYIQMSKSDAHRALIASSLAKTPSIIKRWIDNVSVDVEVTKNAVSNFADLEIIDDNLKVFPKKEYKKELVIDVKESGSSLRFLIPIMSAFGITCTFTGSKKLFSRPIDVYKKIWKEEGLEFIHSEDSIKISGQLKASNFKVLGNLSSQFLSGLLFALPLLDGNSNIIIDGELESEPYVMMTLKTLKAANIETLRHDNNIIEVYGNQEYSGIDYEVESDWSHAAFFAAAGALGGETTLYGLNKYSIQGDKEILNILKFMGASVSYNDDNSITIKKTNRLNALDIDMSDIPDLGPIITTLAATAKGRTRLYNAGRLRYKESDRMNDLMDSFSRIGANIEVSEDEILIEGVERLKGGNTTSHNDHRIAMALAVASAVSDNDIIIDDAESINKSSFNFIEQFRSIGAKVVS.

Lysine 20, serine 21, and arginine 25 together coordinate 3-phosphoshikimate. Lysine 20 serves as a coordination point for phosphoenolpyruvate. Positions 90 and 118 each coordinate phosphoenolpyruvate. The 3-phosphoshikimate site is built by serine 159, serine 160, glutamine 161, serine 187, aspartate 303, and lysine 330. Glutamine 161 lines the phosphoenolpyruvate pocket. Aspartate 303 serves as the catalytic Proton acceptor. Residues arginine 334, arginine 376, and lysine 402 each coordinate phosphoenolpyruvate.

The protein belongs to the EPSP synthase family. As to quaternary structure, monomer.

It is found in the cytoplasm. It catalyses the reaction 3-phosphoshikimate + phosphoenolpyruvate = 5-O-(1-carboxyvinyl)-3-phosphoshikimate + phosphate. Its pathway is metabolic intermediate biosynthesis; chorismate biosynthesis; chorismate from D-erythrose 4-phosphate and phosphoenolpyruvate: step 6/7. Catalyzes the transfer of the enolpyruvyl moiety of phosphoenolpyruvate (PEP) to the 5-hydroxyl of shikimate-3-phosphate (S3P) to produce enolpyruvyl shikimate-3-phosphate and inorganic phosphate. This is 3-phosphoshikimate 1-carboxyvinyltransferase from Brachyspira hyodysenteriae (strain ATCC 49526 / WA1).